Here is a 4568-residue protein sequence, read N- to C-terminus: MAEDEGMTAAAPSSSVKDIRFDYIRDRVCSCLKVPDSAYDKLVSGDGRTSLVQFMEEAHTKRLLIMLDGKDLSATVKPPPKFKKKTVYFLKLQETKLDNDNIKKLVIHGEISENPLETLAAISQDVFMPVLTAPANQQGWPDVVAKEVTENLHKFVSNVFVTIGQMKGQTLLPLPPQNTVPTLQPEQSMHSLKDQDKIHILESAIVTWTKQIKNVLKADPDAPLKEPGAYPGPLTELNFWSERAANLNSIHEQLTSEKTQKVVKVLELAKSTYYPAFQRLFREVEAAQQEANDNVKFLKPLRKYLDKLNMMDDFPMLVDLFKPIMHTLMLIWKHSKSYNSSTRFVTLMQEICNDLIMQACKYVPGSDLIQMEPSEAVDKLRMTLRWLGTFKNYYFEYRALSMQDTPENPWKFQNNSLFARLDSFLERCHDMMDLMSTCMQFNRLERVEIGGTKGKVLTNGVKAIHQDFTSAVEKFQQVTYDVMDVDAKQFDEDFFGFRVVIKELERRLAAIIIQAFDDCTTIGTTFKLLDSFEGLLDREVIAHDLEKKHTDLLHSYARDLKDVADLFHQYKDRPIVAKNSAPYSGAAYWVRGLMERIKDPMDRLLTMNKMVLESELFREIQRTYDHLWEEMTEYRTRAVDAWCAQVAATSDEKLNLPLLSLIEETADGIRVLGVNFDPALVRLLRETKYFLLLETSTQDKNADRNAEKAAEGGEVEVVKKAPKLSVPDSAKDLFASADTFRQQISALDLICSIYNKVQRTILAVEKPLVQQKLDAVEQALNRGLAELNWKCAEIDTYIKECMELVKDVDLVLNTIKDNVKATQGILAMWEKNLMFERKDGKTYTFDELNDAFNQLIQQRHSEIRDAGKEITKLLSSSNRVLKVSKGAASWRAYVDYFSNIVIDGFSAAIISTVRYLLSQIDPDILAKTESSPLLEIQVELVAPDIVWKPDLGEGGAKPGLRDMIKKWLQSFLEIGQLMKRLDVGEGNYAKELEEDFEVYDALNQVMMVTLANESRCEDFKNQFAKFDYLWKQDLQATLQQFITDNGVTLPDGTRDDPPLAKFEEQIVKYKNVASEIASFKDTMTMGYVKVNAKPLRQALSTWASKWVYLFTHYLQEKVVNSITELYTFMDTSNSTLDLKVMGEGVEEEPEYHPDQDPEEAAAKKAAEEEEKRKALYAIMACMRDIRRRTERGTDTMFEPLKETVTALHTFGIQLSDTVLHQLDNAEFNWRTLKKKMLNRREQLAPLQQAEAVEIRRKSDAFNERVEDFRTFFQRKAPFAVSGGELKLEQVKPAYKLLDEFRSGSLEGYPSVLGIIAESKQLQEAQDLFELYQPGYLQLQRCSEELGHLKSLWDTVGTVMFTFRDWYKTPWDKIDVDFLVEETKKLSKDIKMLNKAVRNYDVYRMLEEAIKAVLTSLPLVQDLHHPAMRERHWKLLMQTTGKHFVMDDKFCLGDLLALELHNYVDACSEIVDRAQKELNIEKQLKKIEDTWAGLSLAFSTYQDSDVMALLVDDAVNEALEADNLQLQNLSGQKYVQSNPMFLETVSKWQNNMGRVSAVLETWQNVQKKWQNLESIFIGSADIRVQLPEDSKRFDAVNADFQELMRTAPDITNVVEACTLDGRQERLENMQSMLEQCEKALQEYLETKRVAFPRFYFVSPADLLDILSKGSNPQLILRHLQKCFDNIDNLSFRKDERGDPTKIATHMHSKEGEVVEFVEDCSCDGPVEVWLQNVVDSMKLALQVEFRKAIPTYDELPRTKWIYVYSAQNTVVVSRTFFTQEINEAFDDLEEGNEEALKVELDRQVQQLADLIDEINKEQTSLDRKKLITLCTIDVHSRDLVQKLIDERVEDQMCFQWQSQLRYIQSEKTKTCQVNICDAEIAYSYEYIGNCGCLCITPLTDRCFITLTQAQRLVLGGAPAGPAGTGKTETTKDLARALGIQCYVFNCSDQMDYKAMGHTYKGLAQTGAWGCFDEFNRIPVAVLSVCSTQYKTVLDAIRAKKERFTFEDADISLKSTVMAFITMNPGYPGRAELPESLKALFRPVSMVVPDLALICEIMLMAEGFQMSKILSRKFVILYKLCEDLLSKSRHYDWKLRAIKTTLYVAGGMKRAAPELSEDKVLLRALRDFNLGKLTADDTSIFMGLLNDLFPKTLELVPRALDKAFDEAAHKAATELGYQPDDQFLLKISHVRELFVVRWSVFLLGAAGCGKTAVWRTLLRAQNSSGEKTIYQAVNPKAVTRNELYGYLHPATREWKEGLMSVTFRNMANNKTNKHQWIVLDGDIDAEWIESMNTVMDDNKMLTLASNERIPLTPSMRLLLEINHMVHCSPATVSRGGVIFINADDVGWQPVVASWIDKLEAAEYRPLLTALFTKYVDPCLEHCRRNFKTVVPLPAVNQAMTICKILEGILPKETVRGAPPPDKKLLHYHFVFACVWAFGGCMLVDKVTDYRTQFSKWWVSEWKDVQFPEKGLVYDYYVDEQNCIMVPWEDRVTKFQYIPGDFTSLFVPTVETTRLTYFLDSLVSNKHYAMFVGNTGTGKSAIMVNKLRNMDTETMSFYTINMNSLSEAPALQVILEQPLEKKSGVRYGPPGSRRMVYFVDDMNMPLVDKYDTQSSIELLRQMVDYHGWYDKVKIQLKEIINCQMAACMNPTAGSFNITPRMQRHFVTFAVQMPNAEITRAMYYQIIDGHFSSFDVDVAKMSNKLVDATCELHRNVMHNFLPSAVKFHYQFNLRDLSNITQGLTRAIKEYYREPVKVARLWVHECERVFRDRMINEADMAKFDEFRVAVTKKFFDDCGGMVAIEERPLIYASHASMTYTPEDVPVYNALSSYDVLRKTLEDKLREYNESNAVMDLVLFQQAMEHVTRIARIIDLPRGNAMLVGVGGSGKQSLARLASYICGYEVYQISVSSTYGINDFKENLLGLYRKAGTKGTPITFLMTDNQIVKEGFLVYINDLLSTGYIADLFTPEDKEAFTNAVRNEVKAAGILDSAENCWDFFIDKVRKFLHIVLCFSPVGDKFRIRARQFPALVNCTMFDWFHGWPGEALVSVAQRFLVDVPNMEEVVRENIAYHMAYAHQCVSEASERFKEAFRRYNYTTPKSYLELISLYKMLLQLKRDDLRRSKERLENGIDKIAQAAAQVTDLQRVLKEEQIVVDEKKAQTDELIVSIGKEKAIVDQAVEAGREDEEAATALQTEVSAFQAECERDLLEAEPIIAQAEAALNSLNKKELSELKSFGSPAAEIVQVAAACLVLTCGGKIPKDRDWNAGKKMMADVNSFLSSLMNFDKDNVPVVCVEVVEKDYISNPGFTPDNIKGKSAACAGLCSWVINICKYFRIYQVVAPKRAALAEANKKLDTANKKLKVIRDEVKRLQDRVALLEQSLMKATEDKNAAIAQADRTARKAQMAERLINGLSGENTRWGAEIKRLESLEGRLVGDVLIASAFVSYAGPFNMQFRKSLVDEKWLPDIIERQIPMTQGIRPLDLLTDDATKAKWANEGLPTDPLSVENGAIMSNASRWALMIDPQLQGIKWIINKETNNGLVIIQQSQPKYIDQVINCIENGWPLLIENLPVDIDAVLDPVIGKMTIKKGRNIIMKIGDAEVQYDSRFRLYLQTKLSNPHFKPEVAAQTTLVNFCVTEKGLEDQLLALVVDHERPDLQEQAAGLVRSLNEYNITLVELENNLLFNLANATGNILENIELIEGLEETKRTAVEIEEKVKLAKQTEIQIAKAREVYRPVATRGSLTYFLIDNLNALDRVYHYSMANFVFVLKKGMDMTPGGKDESKVPLAERLNQEVDLDKRVELLVETTCFVLIGYVAQGLFERHKLIVATQLCMQILRSRGELHYAKFEYLLRGPKVMGADNPLHDWVSDSVWGSVQALKELDDYQGLPEDLIGSSKRWREWMELERPEDEPLPGDWKRMQEFDKLLLFRALRPDRLTSAMGRFVTNMLGAKYVTSQPYDLERSYQDASPGTPIFVFLSPGVDVAGSVEALGKKLGFTLDNGKYASVSLGQGQEPIAMDRLSAAHKNGGWVLLQNIHLTIDWTTNQLDKKVDKLVEGAHPDFRLFLSAEPPPSLERGLPISLLQNSIKLTNEPARGLKANLRRAWNNFNEEILESCAKQAEFRAIVFALCYFHAALLERKKFGVGNLPGARSGIGWNMNYPFNTGDLLCCGQTANNYLENNVKVPWEDLRYNFGEIMYGGHIVEDYDRRLAMCYLRKYVNEGLLDNMEFFPGFAMPPNTANHRQVLEFIDEVMPPETPLAFGLHPNAEIGFKLREAESFCNSLVQLQPRESSGEGGMSAEERAKLVLDEVVDKLPDIFDMEDVRSKINPDDPNMPFVMVAIQESERMNMLLAEMKRSLLELDLGLKGDLTMTEPMERLLKALATDAVPGSWRNLAYPSLRPLGSWLGNLLARHAQLVDWTAELSTPKAVWLSGLFNPQSFLTAVMQATARRNDWPLDKTVIITEVTKKQPDQIEANSRDGAFIHGLTLEGARWDDKIGALDDSKPKELFCPMPVILVRAVTQDKAEMKDVYKCPVYTTEARFREEVFEAQLKSKHTEIKWVLAGVCLFLDVV.

A stem region spans residues 1–1880 (MAEDEGMTAA…QVNICDAEIA (1880 aa)). Coiled coils occupy residues 277–293 (FQRL…EAND), 1158–1175 (EEAA…RKAL), 1372–1400 (KIDV…RNYD), 1614–1650 (EACT…RVAF), and 1778–1825 (QEIN…RKKL). Residues 1144 to 1166 (GVEEEPEYHPDQDPEEAAAKKAA) form a disordered region. Residues 1150 to 1166 (EYHPDQDPEEAAAKKAA) are compositionally biased toward basic and acidic residues. 4 AAA regions span residues 1881 to 2102 (YSYE…TLYV), 2164 to 2385 (EAAH…RNFK), 2493 to 2738 (QYIP…ITQG), and 2841 to 3090 (EYNE…FRRY). ATP contacts are provided by residues 1919-1926 (GPAGTGKT), 2202-2209 (GAAGCGKT), and 2530-2537 (GNTGTGKS). Residues 2831–2848 (LRKTLEDKLREYNESNAV) adopt a coiled-coil conformation. 2879-2886 (GVGGSGKQ) contacts ATP. Coiled-coil stretches lie at residues 3106 to 3162 (KMLL…DELI), 3339 to 3425 (KRAA…RLES), and 3648 to 3728 (HERP…KARE). A stalk region spans residues 3106 to 3425 (KMLLQLKRDD…WGAEIKRLES (320 aa)). AAA regions lie at residues 3481 to 3711 (LTDD…EIEE) and 3937 to 4172 (MGRF…TANN).

It belongs to the dynein heavy chain family. Consists of at least 3 heavy chains (alpha, beta and gamma), 2 intermediate chains and 8 light chains.

The protein resides in the cell projection. Its subcellular location is the cilium. It is found in the flagellum. The protein localises to the cytoplasm. It localises to the cytoskeleton. The protein resides in the flagellum axoneme. Its function is as follows. Force generating protein of eukaryotic cilia and flagella. Produces force towards the minus ends of microtubules. Dynein has ATPase activity; the force-producing power stroke is thought to occur on release of ADP. The chain is Dynein beta chain, flagellar outer arm (ODA4) from Chlamydomonas reinhardtii (Chlamydomonas smithii).